Reading from the N-terminus, the 509-residue chain is Kynureninase 1 (509 aa).

Residues L154, T155, 183–186 (FPSD), D270, H273, and Y295 contribute to the pyridoxal 5'-phosphate site. An N6-(pyridoxal phosphate)lysine modification is found at K296. 2 residues coordinate pyridoxal 5'-phosphate: W345 and N373.

It belongs to the kynureninase family. In terms of assembly, homodimer. Requires pyridoxal 5'-phosphate as cofactor.

It localises to the cytoplasm. The catalysed reaction is L-kynurenine + H2O = anthranilate + L-alanine + H(+). The enzyme catalyses 3-hydroxy-L-kynurenine + H2O = 3-hydroxyanthranilate + L-alanine + H(+). It functions in the pathway amino-acid degradation; L-kynurenine degradation; L-alanine and anthranilate from L-kynurenine: step 1/1. The protein operates within cofactor biosynthesis; NAD(+) biosynthesis; quinolinate from L-kynurenine: step 2/3. In terms of biological role, catalyzes the cleavage of L-kynurenine (L-Kyn) and L-3-hydroxykynurenine (L-3OHKyn) into anthranilic acid (AA) and 3-hydroxyanthranilic acid (3-OHAA), respectively. The chain is Kynureninase 1 from Chaetomium globosum (strain ATCC 6205 / CBS 148.51 / DSM 1962 / NBRC 6347 / NRRL 1970) (Soil fungus).